A 430-amino-acid chain; its full sequence is Uric acid permease PucK (430 aa).

Helical transmembrane passes span 18–38 (MLAM…AIGL), 43–63 (LTYL…LQLW), 67–87 (YFGI…GPMI), 97–117 (AIYG…GFFG), 122–142 (FFPP…LIPT), 163–183 (LLGF…KGFI), 185–205 (SIAI…MGKV), 209–229 (EVLE…PPTF), 233–253 (AVVT…GVYF), 274–294 (AEGL…TAFS), 310–330 (VIAI…AAAL), 333–353 (VIPT…VISY), 369–389 (LLII…PALF), and 398–418 (VLAG…HAFF).

It belongs to the nucleobase:cation symporter-2 (NCS2) (TC 2.A.40) family.

Its subcellular location is the cell membrane. In terms of biological role, uptake of uric acid. This Bacillus subtilis (strain 168) protein is Uric acid permease PucK (pucK).